A 417-amino-acid polypeptide reads, in one-letter code: Dihydroorotase (417 aa).

Zn(2+)-binding residues include histidine 60 and histidine 62. Residues 62–64 (HLR) and asparagine 94 each bind substrate. Positions 138, 167, 207, and 275 each coordinate Zn(2+). The residue at position 138 (lysine 138) is an N6-carboxylysine. Residue aspartate 275 is part of the active site. Substrate-binding positions include histidine 279 and 289 to 290 (AG).

Belongs to the metallo-dependent hydrolases superfamily. DHOase family. Class I DHOase subfamily. It depends on Zn(2+) as a cofactor.

The enzyme catalyses (S)-dihydroorotate + H2O = N-carbamoyl-L-aspartate + H(+). The protein operates within pyrimidine metabolism; UMP biosynthesis via de novo pathway; (S)-dihydroorotate from bicarbonate: step 3/3. Functionally, catalyzes the reversible cyclization of carbamoyl aspartate to dihydroorotate. The chain is Dihydroorotase from Pyrococcus horikoshii (strain ATCC 700860 / DSM 12428 / JCM 9974 / NBRC 100139 / OT-3).